Here is a 282-residue protein sequence, read N- to C-terminus: MDYNLPIPLEGLKETPPTAFLTKTYNIVEDSSTNNIVSWSRDNNSFIVWEPETFALICLPRCFKHNNFSSFVRQLNTYGFKKIDTERWEFANEHFLKGERHLLKNIKRRKTSSQTQTQSLEGEIHELRRDRMALEVELVRLRRKQESVKTYLHLMEEKLKVTEVKQEMMMNFLLKKIKKPSFLQSLRKRNLQGIKNREQKQEVISSHGVEDNGKFVKAEPEEYGDDIDDQCGGVFDYGDELHIASMEHQGQGEDEIEMDSEGIWKGFVLSEEEMCDLVEHFI.

Residues 17–111 (PTAFLTKTYN…LLKNIKRRKT (95 aa)) mediate DNA binding. The interval 111–177 (TSSQTQTQSL…MMMNFLLKKI (67 aa)) is hydrophobic repeat HR-A/B. Positions 175–190 (KKIKKPSFLQSLRKRN) match the Bipartite nuclear localization signal motif. An AHA motif is present at residues 261-270 (EGIWKGFVLS).

It belongs to the HSF family. Class A subfamily. In terms of assembly, homotrimer. In terms of processing, exhibits temperature-dependent phosphorylation.

The protein resides in the nucleus. Functionally, transcriptional activator that specifically binds DNA sequence 5'-AGAAnnTTCT-3' known as heat shock promoter elements (HSE). The sequence is that of Heat stress transcription factor A-6a (HSFA6A) from Arabidopsis thaliana (Mouse-ear cress).